The sequence spans 183 residues: Crossover junction endodeoxyribonuclease RuvC (183 aa).

Residues D7, E66, and D138 contribute to the active site. Positions 7, 66, and 138 each coordinate Mg(2+).

Belongs to the RuvC family. Homodimer which binds Holliday junction (HJ) DNA. The HJ becomes 2-fold symmetrical on binding to RuvC with unstacked arms; it has a different conformation from HJ DNA in complex with RuvA. In the full resolvosome a probable DNA-RuvA(4)-RuvB(12)-RuvC(2) complex forms which resolves the HJ. Mg(2+) is required as a cofactor.

The protein resides in the cytoplasm. It carries out the reaction Endonucleolytic cleavage at a junction such as a reciprocal single-stranded crossover between two homologous DNA duplexes (Holliday junction).. The RuvA-RuvB-RuvC complex processes Holliday junction (HJ) DNA during genetic recombination and DNA repair. Endonuclease that resolves HJ intermediates. Cleaves cruciform DNA by making single-stranded nicks across the HJ at symmetrical positions within the homologous arms, yielding a 5'-phosphate and a 3'-hydroxyl group; requires a central core of homology in the junction. The consensus cleavage sequence is 5'-(A/T)TT(C/G)-3'. Cleavage occurs on the 3'-side of the TT dinucleotide at the point of strand exchange. HJ branch migration catalyzed by RuvA-RuvB allows RuvC to scan DNA until it finds its consensus sequence, where it cleaves and resolves the cruciform DNA. This is Crossover junction endodeoxyribonuclease RuvC from Burkholderia ambifaria (strain ATCC BAA-244 / DSM 16087 / CCUG 44356 / LMG 19182 / AMMD) (Burkholderia cepacia (strain AMMD)).